We begin with the raw amino-acid sequence, 490 residues long: ATP synthase subunit beta (490 aa).

173–180 contributes to the ATP binding site; sequence GGAGVGKT.

Belongs to the ATPase alpha/beta chains family. In terms of assembly, F-type ATPases have 2 components, CF(1) - the catalytic core - and CF(0) - the membrane proton channel. CF(1) has five subunits: alpha(3), beta(3), gamma(1), delta(1), epsilon(1). CF(0) has three main subunits: a(1), b(2) and c(9-12). The alpha and beta chains form an alternating ring which encloses part of the gamma chain. CF(1) is attached to CF(0) by a central stalk formed by the gamma and epsilon chains, while a peripheral stalk is formed by the delta and b chains.

The protein localises to the cell membrane. It carries out the reaction ATP + H2O + 4 H(+)(in) = ADP + phosphate + 5 H(+)(out). Functionally, produces ATP from ADP in the presence of a proton gradient across the membrane. The catalytic sites are hosted primarily by the beta subunits. The polypeptide is ATP synthase subunit beta (Bifidobacterium longum (strain DJO10A)).